Reading from the N-terminus, the 331-residue chain is UDP-glucose 4-epimerase (331 aa).

NAD(+) contacts are provided by residues 11-12 (YI), 31-36 (DNLITG), 51-52 (DI), 73-77 (FAAFS), Asn92, Thr117, Tyr141, Lys145, and Phe169. Residues Thr117 and Tyr141 each coordinate substrate. Residue Tyr141 is the Proton acceptor of the active site. Substrate contacts are provided by residues Asn170, 189-190 (HI), 206-208 (QIY), Arg221, and 282-285 (RAGD).

Belongs to the NAD(P)-dependent epimerase/dehydratase family. In terms of assembly, homodimer. The cofactor is NAD(+).

The catalysed reaction is UDP-alpha-D-glucose = UDP-alpha-D-galactose. The protein operates within carbohydrate metabolism; galactose metabolism. In Lacticaseibacillus casei (Lactobacillus casei), this protein is UDP-glucose 4-epimerase (galE).